A 359-amino-acid chain; its full sequence is Phospho-N-acetylmuramoyl-pentapeptide-transferase (359 aa).

10 helical membrane passes run 26 to 46, 73 to 93, 98 to 118, 134 to 154, 166 to 186, 197 to 217, 234 to 254, 261 to 281, 286 to 306, and 338 to 358; these read TIYGGLTAFLICFLLGPWVIN, TMGGILILFSLGVSTLLWADL, ILITLLSMLLFGAIGFIDDYL, FLVQIMAGLVISYLVYLCPDF, FTPDLGIWYIPFATLVIVGTS, GLAIGPIIIAGVTYMIFAYVA, CGEITIVCGILAGAGLGFLWF, VFMGDTGSIPLGAILGTIAVI, ILLLVVGGLFVIEALSVIIQV, and IVRFWIIAITLALISLSTLKI.

The protein belongs to the glycosyltransferase 4 family. MraY subfamily. Requires Mg(2+) as cofactor.

The protein localises to the cell inner membrane. It carries out the reaction UDP-N-acetyl-alpha-D-muramoyl-L-alanyl-gamma-D-glutamyl-meso-2,6-diaminopimeloyl-D-alanyl-D-alanine + di-trans,octa-cis-undecaprenyl phosphate = di-trans,octa-cis-undecaprenyl diphospho-N-acetyl-alpha-D-muramoyl-L-alanyl-D-glutamyl-meso-2,6-diaminopimeloyl-D-alanyl-D-alanine + UMP. It functions in the pathway cell wall biogenesis; peptidoglycan biosynthesis. In terms of biological role, catalyzes the initial step of the lipid cycle reactions in the biosynthesis of the cell wall peptidoglycan: transfers peptidoglycan precursor phospho-MurNAc-pentapeptide from UDP-MurNAc-pentapeptide onto the lipid carrier undecaprenyl phosphate, yielding undecaprenyl-pyrophosphoryl-MurNAc-pentapeptide, known as lipid I. This is Phospho-N-acetylmuramoyl-pentapeptide-transferase from Desulforapulum autotrophicum (strain ATCC 43914 / DSM 3382 / VKM B-1955 / HRM2) (Desulfobacterium autotrophicum).